A 120-amino-acid chain; its full sequence is Small ribosomal subunit protein bS16 (120 aa).

A compositionally biased stretch (basic and acidic residues) spans 84–110 (KREVKSNPEKAKPGKRAQERAAEKAQK). The disordered stretch occupies residues 84 to 120 (KREVKSNPEKAKPGKRAQERAAEKAQKAADAAAATAE). Over residues 111 to 120 (AADAAAATAE) the composition is skewed to low complexity.

It belongs to the bacterial ribosomal protein bS16 family.

This Rhizobium rhizogenes (strain K84 / ATCC BAA-868) (Agrobacterium radiobacter) protein is Small ribosomal subunit protein bS16.